A 62-amino-acid polypeptide reads, in one-letter code: Small ribosomal subunit protein bS21 (62 aa).

Residues 43-62 (EKRKRKAMALQKQRKRRSRY) are disordered. The segment covering 44-62 (KRKRKAMALQKQRKRRSRY) has biased composition (basic residues).

Belongs to the bacterial ribosomal protein bS21 family.

In Trichodesmium erythraeum (strain IMS101), this protein is Small ribosomal subunit protein bS21.